The following is a 226-amino-acid chain: Gap junction beta-2 protein (226 aa).

Residues 2–13 lie within the membrane without spanning it; it reads DWGALQTILGGV. Topologically, residues 14 to 20 are cytoplasmic; it reads NKYSTSI. Residues 21–40 form a helical membrane-spanning segment; sequence GKIWLTVLFIFRIMILVVAA. Residues 41-73 are Extracellular-facing; the sequence is KEVWGDEQADFVCNTLQPGCKNVCYDHYFPISH. Ca(2+) is bound by residues Glu-42, Gly-45, and Glu-47. 3 disulfide bridges follow: Cys-53–Cys-180, Cys-60–Cys-174, and Cys-64–Cys-169. A helical membrane pass occupies residues 74 to 94; it reads IRLWALQLIFVSTPALLVAMH. The Cytoplasmic segment spans residues 95 to 135; the sequence is VAYRRHEKKRKFIKGEIKNEFKDIEEIKTQKVRIEGSLWWT. Residues 136–156 traverse the membrane as a helical segment; sequence YTSSIFFRVVFEAAFMYVFYV. Residues 157 to 189 lie on the Extracellular side of the membrane; it reads MYDGFSMQRLVKCNAWPCPNTVDCFVSRPTEKT. The helical transmembrane segment at 190 to 210 threads the bilayer; that stretch reads VFTVFMIAVSGICILLNVTEL. Over 211 to 226 the chain is Cytoplasmic; that stretch reads CYLLIRYCSGKSKKPV.

The protein belongs to the connexin family. Beta-type (group I) subfamily. As to quaternary structure, a hemichannel or connexon is composed of a hexamer of connexins. A functional gap junction is formed by the apposition of two hemichannels. Forms heteromeric channels with GJB4. Interacts with CNST.

The protein resides in the cell membrane. The protein localises to the cell junction. Its subcellular location is the gap junction. Its function is as follows. Structural component of gap junctions. Gap junctions are dodecameric channels that connect the cytoplasm of adjoining cells. They are formed by the docking of two hexameric hemichannels, one from each cell membrane. Small molecules and ions diffuse from one cell to a neighboring cell via the central pore. This chain is Gap junction beta-2 protein (GJB2), found in Macaca mulatta (Rhesus macaque).